The chain runs to 276 residues: Undecaprenyl-diphosphatase (276 aa).

Helical transmembrane passes span 2-22, 43-63, 83-103, 111-131, 147-167, 186-206, 224-244, and 255-275; these read LEIL…FLPI, FIDM…VVLY, WTLW…GLPL, LMNW…FIVI, TLPY…LIPG, YVAA…ASLL, LILA…IRFL, and AFGW…ALLA.

Belongs to the UppP family.

The protein resides in the cell membrane. The enzyme catalyses di-trans,octa-cis-undecaprenyl diphosphate + H2O = di-trans,octa-cis-undecaprenyl phosphate + phosphate + H(+). Catalyzes the dephosphorylation of undecaprenyl diphosphate (UPP). Confers resistance to bacitracin. The chain is Undecaprenyl-diphosphatase from Limosilactobacillus fermentum (strain NBRC 3956 / LMG 18251) (Lactobacillus fermentum).